The chain runs to 105 residues: MSNGAADRARLRHLDHCRQPHCFARDICVFTYFELPEEHPQGPAHGVRITVEKGIDTHLIKFFTKRPLLVEKDQGNTILTLYCICPVPGLHEDFCCHLCAEFNHL.

This sequence belongs to the adenoviridae E3A-2 family.

Functionally, not yet known. The protein is Early E3A 12.1 kDa protein of Human adenovirus A serotype 12 (HAdV-12).